A 1054-amino-acid polypeptide reads, in one-letter code: Translation initiation factor IF-2 (1054 aa).

4 disordered regions span residues 57-213, 225-248, 287-315, and 401-436; these read DKRK…AASC, DPLA…NPGD, SGRP…HGLQ, and DHAG…KQEL. Residues 92–104 are compositionally biased toward polar residues; the sequence is QEPSQAASDVSSP. The segment covering 111–213 has biased composition (low complexity); it reads EASGAEAAAS…VTSGRRAASC (103 aa). Residues 401–418 are compositionally biased toward basic and acidic residues; that stretch reads DHAGRGRELVDVSKNKDK. The region spanning 552–721 is the tr-type G domain; sequence TRPPVVTVMG…VLQAEVLELT (170 aa). Residues 561–568 form a G1 region; sequence GHVDHGKT. GTP is bound at residue 561–568; the sequence is GHVDHGKT. Positions 586-590 are G2; that stretch reads GITQH. Residues 607-610 form a G3 region; sequence DTPG. Residues 607–611 and 661–664 contribute to the GTP site; these read DTPGH and NKMD. A G4 region spans residues 661 to 664; that stretch reads NKMD. The segment at 697–699 is G5; that stretch reads SAK.

This sequence belongs to the TRAFAC class translation factor GTPase superfamily. Classic translation factor GTPase family. IF-2 subfamily.

It localises to the cytoplasm. Its function is as follows. One of the essential components for the initiation of protein synthesis. Protects formylmethionyl-tRNA from spontaneous hydrolysis and promotes its binding to the 30S ribosomal subunits. Also involved in the hydrolysis of GTP during the formation of the 70S ribosomal complex. This is Translation initiation factor IF-2 (infB) from Stigmatella aurantiaca.